A 275-amino-acid chain; its full sequence is S-formylglutathione hydrolase (275 aa).

Catalysis depends on charge relay system residues Ser-145, Asp-221, and His-254.

It belongs to the esterase D family.

The enzyme catalyses S-formylglutathione + H2O = formate + glutathione + H(+). Functionally, serine hydrolase involved in the detoxification of formaldehyde. Hydrolyzes S-formylglutathione to glutathione and formate. The sequence is that of S-formylglutathione hydrolase from Haemophilus influenzae (strain ATCC 51907 / DSM 11121 / KW20 / Rd).